The primary structure comprises 271 residues: Gasdermin bGSDM (271 aa).

A lipid anchor (S-palmitoyl cysteine) is attached at C7. 4 beta stranded membrane-spanning segments follow: residues 74-90, 102-120, 168-185, and 194-210; these read IAGTQSADLDVDLGLSV, TLGVDAAFARAATVQFEFS, RINVAAKDSNKQSLGLNL, and ANVKIAAAAASGSTVSF.

It belongs to the bacterial gasdermin family. In terms of assembly, monomer. Forms large, homooligomeric ring-shaped pores when inserted in membranes. Post-translationally, palmitoylation helps stabilize the inactive state; may self palmitoylate. Palmitoylation plays a significant role in pore formation.

Its subcellular location is the cytoplasm. It is found in the cell inner membrane. Its activity is regulated as follows. The full-length protein before cleavage is inactive: intramolecular interactions between the N-terminal domain and the C-terminal region as well as the lipid modification, mediate autoinhibition. The pyroptosis-like-inducing activity is carried by the released N-terminal domain (Gasdermin bGSDM, N-terminus). Its function is as follows. Involved in defense against bacteriophages. When this probable 4 gene operon (bGSDM-FE772_23060-FE772_23065-FE772_23070) is inserted into E.coli it provides nearly 100-fold protection against phages T5 and T6 and about 8-fold against phage T4. The operon without bGSDM no longer protects against phage. Cleavage of this precursor by its dedicated protease(s) releases the active moiety (gasdermin bGSDM, N-terminus) which inserts into membranes, forming pores and triggering cell death. Functionally, pore-forming protein that causes membrane permeabilization via a pyroptosis-like activity. Makes ring-like pores when released. The protein is Gasdermin bGSDM of Lysobacter enzymogenes.